The chain runs to 198 residues: ATP-dependent Clp protease proteolytic subunit (198 aa).

The active-site Nucleophile is the Ser-98. His-123 is an active-site residue.

It belongs to the peptidase S14 family. As to quaternary structure, fourteen ClpP subunits assemble into 2 heptameric rings which stack back to back to give a disk-like structure with a central cavity, resembling the structure of eukaryotic proteasomes.

It is found in the cytoplasm. The catalysed reaction is Hydrolysis of proteins to small peptides in the presence of ATP and magnesium. alpha-casein is the usual test substrate. In the absence of ATP, only oligopeptides shorter than five residues are hydrolyzed (such as succinyl-Leu-Tyr-|-NHMec, and Leu-Tyr-Leu-|-Tyr-Trp, in which cleavage of the -Tyr-|-Leu- and -Tyr-|-Trp bonds also occurs).. In terms of biological role, cleaves peptides in various proteins in a process that requires ATP hydrolysis. Has a chymotrypsin-like activity. Plays a major role in the degradation of misfolded proteins. This chain is ATP-dependent Clp protease proteolytic subunit, found in Ehrlichia ruminantium (strain Welgevonden).